Consider the following 161-residue polypeptide: Nucleotide-binding protein Sfri_0732 (161 aa).

Belongs to the YajQ family.

Nucleotide-binding protein. This is Nucleotide-binding protein Sfri_0732 from Shewanella frigidimarina (strain NCIMB 400).